A 209-amino-acid polypeptide reads, in one-letter code: MTRAIVVTATDTDVGKTVFSAGLAGLLDGCYWKPVQAGLADGTDSDTVRRLSGLPDDRILPEAYRLETPASPHHAAAIDNVVIDPALLAPPPCDRRLVIEGAGGLLVPLAGGLLFADIFAGWRFETVVVARTALGTINHSLLTIEALRARDIPILGIAFIGDPQEESERTIAAIGGVRRLGRLPRLDPLDAGTLAAAFAAAFSPEDFAP.

13–18 (DVGKTV) contacts ATP. Threonine 17 contacts Mg(2+). Lysine 33 is a catalytic residue. A Mg(2+)-binding site is contributed by glutamate 100. ATP contacts are provided by residues 100–103 (EGAG) and 184–186 (PRL).

The protein belongs to the dethiobiotin synthetase family. As to quaternary structure, homodimer. Mg(2+) serves as cofactor.

The protein localises to the cytoplasm. It catalyses the reaction (7R,8S)-7,8-diammoniononanoate + CO2 + ATP = (4R,5S)-dethiobiotin + ADP + phosphate + 3 H(+). The protein operates within cofactor biosynthesis; biotin biosynthesis; biotin from 7,8-diaminononanoate: step 1/2. Catalyzes a mechanistically unusual reaction, the ATP-dependent insertion of CO2 between the N7 and N8 nitrogen atoms of 7,8-diaminopelargonic acid (DAPA, also called 7,8-diammoniononanoate) to form a ureido ring. The protein is ATP-dependent dethiobiotin synthetase BioD of Rhizorhabdus wittichii (strain DSM 6014 / CCUG 31198 / JCM 15750 / NBRC 105917 / EY 4224 / RW1) (Sphingomonas wittichii).